The primary structure comprises 276 residues: Large ribosomal subunit protein uL2 (276 aa).

The interval 221 to 276 is disordered; sequence RGSVMNPNDHPHGGGEGRAPIGRKAPVTPWGKPTLGLKTRKKKNKSDQYIIRRRKK.

Belongs to the universal ribosomal protein uL2 family. Part of the 50S ribosomal subunit. Forms a bridge to the 30S subunit in the 70S ribosome.

Its function is as follows. One of the primary rRNA binding proteins. Required for association of the 30S and 50S subunits to form the 70S ribosome, for tRNA binding and peptide bond formation. It has been suggested to have peptidyltransferase activity; this is somewhat controversial. Makes several contacts with the 16S rRNA in the 70S ribosome. The protein is Large ribosomal subunit protein uL2 of Brevibacillus brevis (strain 47 / JCM 6285 / NBRC 100599).